Here is a 422-residue protein sequence, read N- to C-terminus: GTPase Obg (422 aa).

An Obg domain is found at Met1 to Ile158. An OBG-type G domain is found at Ala159 to Ala330. GTP-binding positions include Gly165–Ser172, Phe190–Val194, Asp212–Gly215, Asn282–Asp285, and Ser311–Ala313. Ser172 and Thr192 together coordinate Mg(2+). The region spanning Val344 to Glu422 is the OCT domain.

It belongs to the TRAFAC class OBG-HflX-like GTPase superfamily. OBG GTPase family. Monomer. The cofactor is Mg(2+).

It localises to the cytoplasm. In terms of biological role, an essential GTPase which binds GTP, GDP and possibly (p)ppGpp with moderate affinity, with high nucleotide exchange rates and a fairly low GTP hydrolysis rate. Plays a role in control of the cell cycle, stress response, ribosome biogenesis and in those bacteria that undergo differentiation, in morphogenesis control. This chain is GTPase Obg, found in Desulforamulus reducens (strain ATCC BAA-1160 / DSM 100696 / MI-1) (Desulfotomaculum reducens).